Consider the following 797-residue polypeptide: Mitochondrial inner membrane m-AAA protease component AFG3L2 (797 aa).

The transit peptide at 1-38 (MAHRCLRLWGRGGCWPRGLQQLLVPGGVGPGEQPCLRT) directs the protein to the mitochondrion. Residues 39-66 (LYRFVTTQARASRNSLLTDIIAAYQRFC) constitute a propeptide, removed in mature form. The Mitochondrial matrix segment spans residues 39–142 (LYRFVTTQAR…KGDIPWDDKD (104 aa)). The segment at 76 to 126 (YFPNGKNGKKASEPKEVMGEKKESKPAATTRSSGGGGGGGGKRGGKKDDSH) is disordered. The span at 85 to 100 (KASEPKEVMGEKKESK) shows a compositional bias: basic and acidic residues. Positions 108-117 (SGGGGGGGGK) are enriched in gly residues. Lysine 117 carries the N6-succinyllysine modification. The chain crosses the membrane as a helical span at residues 143 to 163 (FRMFFLWTALFWGGVMFYLLL). The Mitochondrial intermembrane segment spans residues 164 to 250 (KRSGREITWK…VPVVYIAESD (87 aa)). The chain crosses the membrane as a helical span at residues 251 to 271 (GSFLLSMLPTVLIIAFLLYTI). The Mitochondrial matrix portion of the chain corresponds to 272-797 (RRGPAGIGRT…EEPPGEKVAN (526 aa)). Residues valine 310, alanine 311, threonine 352, glycine 353, lysine 354, threonine 355, leucine 356, and histidine 490 each contribute to the ATP site. Histidine 574 contacts Zn(2+). Residue glutamate 575 is part of the active site. The Zn(2+) site is built by histidine 578 and aspartate 649. A disordered region spans residues 759–797 (FVEGTGSLDEDTSLPEGLKDWNKEREKEKEEPPGEKVAN). A compositionally biased stretch (basic and acidic residues) spans 775 to 797 (GLKDWNKEREKEKEEPPGEKVAN).

In the N-terminal section; belongs to the AAA ATPase family. The protein in the C-terminal section; belongs to the peptidase M41 family. Homohexamer. Forms heterohexamers with SPG7. The m-AAA protease is either composed of homohexamers of AFG3L2 or heterohexamers of AFG3L2 and SPG7. Interacts with MAIP1. Interacts with DNAJC19. Interacts with PHB2. Requires Zn(2+) as cofactor. Upon import into the mitochondrion, the N-terminal transit peptide is cleaved to generate an intermediate form which undergoes autocatalytic proteolytic processing to generate the proteolytically active mature form. Ubiquitous. Highly expressed in the cerebellar Purkinje cells.

The protein localises to the mitochondrion inner membrane. It carries out the reaction ATP + H2O = ADP + phosphate + H(+). Its function is as follows. Catalytic component of the m-AAA protease, a protease that plays a key role in proteostasis of inner mitochondrial membrane proteins, and which is essential for axonal and neuron development. AFG3L2 possesses both ATPase and protease activities: the ATPase activity is required to unfold substrates, threading them into the internal proteolytic cavity for hydrolysis into small peptide fragments. The m-AAA protease carries out quality control in the inner membrane of the mitochondria by mediating degradation of mistranslated or misfolded polypeptides. The m-AAA protease complex also promotes the processing and maturation of mitochondrial proteins, such as MRPL32/bL32m, PINK1 and SP7. Mediates protein maturation of the mitochondrial ribosomal subunit MRPL32/bL32m by catalyzing the cleavage of the presequence of MRPL32/bL32m prior to assembly into the mitochondrial ribosome. Required for SPG7 maturation into its active mature form after SPG7 cleavage by mitochondrial-processing peptidase (MPP). Required for the maturation of PINK1 into its 52kDa mature form after its cleavage by mitochondrial-processing peptidase (MPP). Acts as a regulator of calcium in neurons by mediating degradation of SMDT1/EMRE before its assembly with the uniporter complex, limiting the availability of SMDT1/EMRE for MCU assembly and promoting efficient assembly of gatekeeper subunits with MCU. Promotes the proteolytic degradation of GHITM upon hyperpolarization of mitochondria: progressive GHITM degradation leads to respiratory complex I degradation and broad reshaping of the mitochondrial proteome by AFG3L2. Also acts as a regulator of mitochondrial glutathione homeostasis by mediating cleavage and degradation of SLC25A39. SLC25A39 cleavage is prevented when SLC25A39 binds iron-sulfur. Involved in the regulation of OMA1-dependent processing of OPA1. May act by mediating processing of OMA1 precursor, participating in OMA1 maturation. The chain is Mitochondrial inner membrane m-AAA protease component AFG3L2 from Homo sapiens (Human).